The following is a 247-amino-acid chain: TM2 domain-containing protein 3 (247 aa).

An N-terminal signal peptide occupies residues 1–30 (MDLMMALKRVCRVLLFVTQMYVFSGRGSLS). Residues 31–179 (FEYSQPVAQP…RTFPKMLYCN (149 aa)) lie on the Extracellular side of the membrane. Residues asparagine 87, asparagine 99, asparagine 139, asparagine 155, asparagine 169, and asparagine 179 are each glycosylated (N-linked (GlcNAc...) asparagine). The helical transmembrane segment at 180 to 200 (WTGGYKWSTALALSITLGGFG) threads the bilayer. A TM2 domain is found at 183–231 (GYKWSTALALSITLGGFGADRFYLGQWREGLGKLFSFGGLGIWTLIDVF). Over 201–215 (ADRFYLGQWREGLGK) the chain is Cytoplasmic. A helical transmembrane segment spans residues 216–236 (LFSFGGLGIWTLIDVFLISVG). Residues 237–247 (YVGPADGSLYI) lie on the Extracellular side of the membrane.

This sequence belongs to the TM2 family.

It is found in the membrane. The sequence is that of TM2 domain-containing protein 3 (tm2d3) from Xenopus laevis (African clawed frog).